The primary structure comprises 314 residues: DNA topoisomerase 1 (314 aa).

One can recognise a Topo IB-type catalytic domain in the interval 73-314 (GKMHVQRRNS…TDYITNTQTV (242 aa)). The active-site O-(3'-phospho-DNA)-tyrosine intermediate is Tyr273.

It belongs to the type IB topoisomerase family.

It catalyses the reaction ATP-independent breakage of single-stranded DNA, followed by passage and rejoining.. Its function is as follows. Releases the supercoiling and torsional tension of DNA introduced during the DNA replication and transcription by transiently cleaving and rejoining one strand of the DNA duplex. Introduces a single-strand break via transesterification at a target site in duplex DNA. The scissile phosphodiester is attacked by the catalytic tyrosine of the enzyme, resulting in the formation of a DNA-(3'-phosphotyrosyl)-enzyme intermediate and the expulsion of a 5'-OH DNA strand. The free DNA strand then undergoes passage around the unbroken strand thus removing DNA supercoils. Finally, in the religation step, the DNA 5'-OH attacks the covalent intermediate to expel the active-site tyrosine and restore the DNA phosphodiester backbone. The protein is DNA topoisomerase 1 (TOP1) of Oryctolagus cuniculus (Rabbit).